The sequence spans 401 residues: Argininosuccinate synthase (401 aa).

8 to 16 (AYSGGLDTS) contacts ATP. Y85 contacts L-citrulline. G115 contacts ATP. L-aspartate-binding residues include T117, N121, and D122. Position 121 (N121) interacts with L-citrulline. Residues R125, S173, S182, E258, and Y270 each contribute to the L-citrulline site.

This sequence belongs to the argininosuccinate synthase family. Type 1 subfamily. As to quaternary structure, homotetramer.

It is found in the cytoplasm. The catalysed reaction is L-citrulline + L-aspartate + ATP = 2-(N(omega)-L-arginino)succinate + AMP + diphosphate + H(+). The protein operates within amino-acid biosynthesis; L-arginine biosynthesis; L-arginine from L-ornithine and carbamoyl phosphate: step 2/3. The chain is Argininosuccinate synthase from Staphylococcus saprophyticus subsp. saprophyticus (strain ATCC 15305 / DSM 20229 / NCIMB 8711 / NCTC 7292 / S-41).